The sequence spans 124 residues: Small ribosomal subunit protein uS12c (124 aa).

The interval 104-124 (SGGVKDRTQRRSKYGVKKPKS) is disordered. The segment covering 113–124 (RRSKYGVKKPKS) has biased composition (basic residues).

It belongs to the universal ribosomal protein uS12 family. As to quaternary structure, part of the 30S ribosomal subunit.

It is found in the plastid. The protein resides in the chloroplast. With S4 and S5 plays an important role in translational accuracy. Located at the interface of the 30S and 50S subunits. The chain is Small ribosomal subunit protein uS12c (rps12) from Thalassiosira pseudonana (Marine diatom).